A 1262-amino-acid polypeptide reads, in one-letter code: Unconventional myosin-VI (1262 aa).

One can recognise a Myosin N-terminal SH3-like domain in the interval 2–53; the sequence is EDGKPVWAPHPTDGFQMGNIVDIGPDSLTIEPLNQKGKTFLALINQVFPAEE. Positions 57–771 constitute a Myosin motor domain; that stretch reads KDVEDNCSLM…KFAEFDQIMK (715 aa). 151–158 contacts ATP; it reads GESGAGKT. A Phosphoserine modification is found at Ser-267. The tract at residues 273–317 is responsible for slow ATPase activity; sequence YLNRGCTRFFANKETDKQILQNRKSPEYVKAGSLKDPLLDDHGDF. A Phosphothreonine modification is found at Thr-405. A Phosphoserine modification is found at Ser-604. 2 actin-binding regions span residues 651–673 and 665–672; these read LNLLLDKLRSTGASFIRCIKPNL and FIRCIKPN. Residues 782 to 810 form a required for binding calmodulin region; the sequence is KRVNLWLVCSRWKKVQWCSLSVIKLKNKI. The region spanning 814-834 is the IQ domain; it reads AEACIKMQKTIRMWLCKRRHK. Positions 835-916 are three-helix bundle; that stretch reads PRIDGLVKVG…EDLLSALQKK (82 aa). Positions 864-984 form a coiled coil; that stretch reads KPEVNRQIKN…EDDEKRIQAE (121 aa). The segment at 917 to 984 is SAH; the sequence is KQQEEEAERL…EDDEKRIQAE (68 aa). Residues 933–955 form a disordered region; sequence MEKERKRREEDEERRRKEEEERR. At Ser-1025 the chain carries Phosphoserine. The tract at residues 1034 to 1253 is interaction with TAX1BP1 and CALCOCO2/NDP52; it reads LRRGPAVQAT…ESRQARPTYA (220 aa). The segment at 1084–1086 is interaction with OPTN; that stretch reads RRL. Ser-1123 carries the phosphoserine modification. The tract at residues 1125 to 1253 is interaction with TOM1; that stretch reads QQNPAAQLPA…ESRQARPTYA (129 aa).

The protein belongs to the TRAFAC class myosin-kinesin ATPase superfamily. Myosin family. Homodimer; dimerization seems to implicate the unfolding of the three-helix bundle region creating an additional calmodulin binding site, and cargo binding. Able to function as a monomer under specific conditions in vitro. Forms a complex with CFTR and DAB2 in the apical membrane of epithelial cells. Component of the DISP/DOCK7-induced septin displacement complex, at least composed of DOCK7, LRCH3 and MYO6. Binding to calmodulin through a unique insert, not found in other myosins, located in the neck region between the motor domain and the IQ domain appears to contribute to the directionality reversal. This interaction occurs only if the C-terminal lobe of calmodulin is occupied by calcium. Interaction with F-actin/ACTN1 occurs only at the apical brush border domain of the proximal tubule cells. Interacts with DAB2. In vitro, the C-terminal globular tail binds a C-terminal region of DAB2. Interacts with CFTR. Interacts with CABP5. Interacts (via residues 1128-1256) with TOM1 (via residues 392-463). Interacts (via residues 1060-1285) with OPTN. Interacts (via residues 1060-1285) with TAX1BP1 and CALCOCO2/NDP52. Interacts with TOM1L2. Interacts with CLIC5; may work together in a complex which also includes RDX and MYO6 to stabilize linkages between the plasma membrane and subjacent actin cytoskeleton at the base of stereocilia. Phosphorylation in the motor domain, induced by EGF, results in translocation of MYO6 from the cell surface to membrane ruffles and affects F-actin dynamics. Phosphorylated in vitro by p21-activated kinase (PAK). In terms of tissue distribution, within the cochlea, expressed specifically within the sensory hair cells (at protein level). Expressed in the inner and outer plexiform layer of the retina (at protein level). Widely expressed. Expressed in the brain, kidney, liver, and testis.

It is found in the golgi apparatus. The protein localises to the trans-Golgi network membrane. The protein resides in the nucleus. Its subcellular location is the cytoplasm. It localises to the perinuclear region. It is found in the membrane. The protein localises to the clathrin-coated pit. The protein resides in the cytoplasmic vesicle. Its subcellular location is the clathrin-coated vesicle. It localises to the cell projection. It is found in the filopodium. The protein localises to the ruffle membrane. The protein resides in the microvillus. Its subcellular location is the cytosol. In terms of biological role, myosins are actin-based motor molecules with ATPase activity. Unconventional myosins serve in intracellular movements. Myosin 6 is a reverse-direction motor protein that moves towards the minus-end of actin filaments. Has slow rate of actin-activated ADP release due to weak ATP binding. Functions in a variety of intracellular processes such as vesicular membrane trafficking and cell migration. Required for the structural integrity of the Golgi apparatus via the p53-dependent pro-survival pathway. Appears to be involved in a very early step of clathrin-mediated endocytosis in polarized epithelial cells. Together with TOM1, mediates delivery of endocytic cargo to autophagosomes thereby promoting autophagosome maturation and driving fusion with lysosomes. Links TOM1 with autophagy receptors, such as TAX1BP1; CALCOCO2/NDP52 and OPTN. May act as a regulator of F-actin dynamics. As part of the DISP complex, may regulate the association of septins with actin and thereby regulate the actin cytoskeleton. May play a role in transporting DAB2 from the plasma membrane to specific cellular targets. May play a role in the extension and network organization of neurites. Required for structural integrity of inner ear hair cells. Required for the correct localization of CLIC5 and RDX at the stereocilium base. Modulates RNA polymerase II-dependent transcription. The sequence is that of Unconventional myosin-VI (Myo6) from Mus musculus (Mouse).